A 370-amino-acid polypeptide reads, in one-letter code: Sphingolipid delta(4)-desaturase (370 aa).

The next 3 helical transmembrane spans lie at V68 to F88, F92 to H112, and L128 to Y148. Residues H112–H116 carry the Histidine box-1 motif. The Histidine box-2 signature appears at H149 to H153. 3 helical membrane-spanning segments follow: residues F173–L193, F197–F217, and V220–A240. A Histidine box-3 motif is present at residues H299–H303.

This sequence belongs to the fatty acid desaturase type 1 family. DEGS subfamily.

Its subcellular location is the membrane. It carries out the reaction an N-acylsphinganine + 2 Fe(II)-[cytochrome b5] + O2 + 2 H(+) = an N-acylsphing-4-enine + 2 Fe(III)-[cytochrome b5] + 2 H2O. The protein operates within lipid metabolism; sphingolipid metabolism. Delta(4)-fatty-acid desaturase which introduces a double bond at the 4-position in the long-chain base (LCB) of ceramides. Required for the formation of the monounsaturated sphingoid base (E)-sphing-4-enine during glucosylceramide (GluCer) biosynthesis. In Candida albicans (strain SC5314 / ATCC MYA-2876) (Yeast), this protein is Sphingolipid delta(4)-desaturase.